The chain runs to 248 residues: ATP synthase subunit a (248 aa).

6 helical membrane passes run 27-47 (FTNSSAYMFGTVALIAILMLV), 83-103 (FFPLVFSLFMFIAVSNLIGIV), 113-133 (LIVTVALALLVFFTVLIYGFS), 142-162 (LFVPSGVPIYILPLVVFIEVI), 192-212 (FVAMLGALGVVGWFGAVLPLG), and 215-235 (IALTALELLVAFLQAYVFAIL).

The protein belongs to the ATPase A chain family. In terms of assembly, F-type ATPases have 2 components, CF(1) - the catalytic core - and CF(0) - the membrane proton channel. CF(1) has five subunits: alpha(3), beta(3), gamma(1), delta(1), epsilon(1). CF(0) has four main subunits: a, b, b' and c.

The protein localises to the cell inner membrane. In terms of biological role, key component of the proton channel; it plays a direct role in the translocation of protons across the membrane. The chain is ATP synthase subunit a from Rhodopseudomonas palustris (strain ATCC BAA-98 / CGA009).